A 416-amino-acid polypeptide reads, in one-letter code: Histidine--tRNA ligase (416 aa).

The protein belongs to the class-II aminoacyl-tRNA synthetase family.

Its subcellular location is the cytoplasm. It carries out the reaction tRNA(His) + L-histidine + ATP = L-histidyl-tRNA(His) + AMP + diphosphate + H(+). This Methanocaldococcus jannaschii (strain ATCC 43067 / DSM 2661 / JAL-1 / JCM 10045 / NBRC 100440) (Methanococcus jannaschii) protein is Histidine--tRNA ligase (hisS).